The primary structure comprises 304 residues: GTPase Era (304 aa).

One can recognise an Era-type G domain in the interval 11-179; sequence YCGFIAIVGR…QKIVRKSLRE (169 aa). The tract at residues 19–26 is G1; sequence GRPNVGKS. Position 19–26 (19–26) interacts with GTP; that stretch reads GRPNVGKS. Residues 45-49 are G2; that stretch reads QTTRH. A G3 region spans residues 66–69; sequence DTPG. Residues 66 to 70 and 128 to 131 each bind GTP; these read DTPGL and NKVD. The G4 stretch occupies residues 128-131; sequence NKVD. Positions 158–160 are G5; it reads ISA. Residues 210 to 287 enclose the KH type-2 domain; sequence TGEELPYSVT…HLELWVKVKA (78 aa).

This sequence belongs to the TRAFAC class TrmE-Era-EngA-EngB-Septin-like GTPase superfamily. Era GTPase family. As to quaternary structure, monomer.

It localises to the cytoplasm. The protein resides in the cell inner membrane. Functionally, an essential GTPase that binds both GDP and GTP, with rapid nucleotide exchange. Plays a role in 16S rRNA processing and 30S ribosomal subunit biogenesis and possibly also in cell cycle regulation and energy metabolism. The sequence is that of GTPase Era from Actinobacillus pleuropneumoniae serotype 5b (strain L20).